A 214-amino-acid chain; its full sequence is Pyridoxine/pyridoxamine 5'-phosphate oxidase (214 aa).

Substrate-binding positions include 9 to 12 (RKSY) and K67. FMN contacts are provided by residues 62–67 (RIVLLK), 77–78 (YT), R83, K84, and Q106. Residues Y124, R128, and S132 each coordinate substrate. FMN-binding positions include 141–142 (QS) and W186. Position 192-194 (192-194 (RLH)) interacts with substrate. Position 196 (R196) interacts with FMN.

This sequence belongs to the pyridoxamine 5'-phosphate oxidase family. Homodimer. FMN is required as a cofactor.

The catalysed reaction is pyridoxamine 5'-phosphate + O2 + H2O = pyridoxal 5'-phosphate + H2O2 + NH4(+). The enzyme catalyses pyridoxine 5'-phosphate + O2 = pyridoxal 5'-phosphate + H2O2. It participates in cofactor metabolism; pyridoxal 5'-phosphate salvage; pyridoxal 5'-phosphate from pyridoxamine 5'-phosphate: step 1/1. It functions in the pathway cofactor metabolism; pyridoxal 5'-phosphate salvage; pyridoxal 5'-phosphate from pyridoxine 5'-phosphate: step 1/1. Catalyzes the oxidation of either pyridoxine 5'-phosphate (PNP) or pyridoxamine 5'-phosphate (PMP) into pyridoxal 5'-phosphate (PLP). The chain is Pyridoxine/pyridoxamine 5'-phosphate oxidase from Leptospira interrogans serogroup Icterohaemorrhagiae serovar copenhageni (strain Fiocruz L1-130).